Consider the following 172-residue polypeptide: Xanthine-guanine phosphoribosyltransferase (172 aa).

5-phospho-alpha-D-ribose 1-diphosphate-binding positions include 47–48 and 106–114; these read RG and DDLVDTGKT. Aspartate 107 serves as a coordination point for Mg(2+). Aspartate 110 and isoleucine 153 together coordinate guanine. Residues aspartate 110 and isoleucine 153 each coordinate xanthine. Residues 110–114 and 152–153 contribute to the GMP site; these read DTGKT and WI.

It belongs to the purine/pyrimidine phosphoribosyltransferase family. XGPT subfamily. Homotetramer. The cofactor is Mg(2+).

It is found in the cell inner membrane. It catalyses the reaction GMP + diphosphate = guanine + 5-phospho-alpha-D-ribose 1-diphosphate. The catalysed reaction is XMP + diphosphate = xanthine + 5-phospho-alpha-D-ribose 1-diphosphate. It carries out the reaction IMP + diphosphate = hypoxanthine + 5-phospho-alpha-D-ribose 1-diphosphate. Its pathway is purine metabolism; GMP biosynthesis via salvage pathway; GMP from guanine: step 1/1. It participates in purine metabolism; XMP biosynthesis via salvage pathway; XMP from xanthine: step 1/1. Purine salvage pathway enzyme that catalyzes the transfer of the ribosyl-5-phosphate group from 5-phospho-alpha-D-ribose 1-diphosphate (PRPP) to the N9 position of the 6-oxopurines guanine and xanthine to form the corresponding ribonucleotides GMP (guanosine 5'-monophosphate) and XMP (xanthosine 5'-monophosphate), with the release of PPi. To a lesser extent, also acts on hypoxanthine. In Rhodopseudomonas palustris (strain BisB5), this protein is Xanthine-guanine phosphoribosyltransferase.